The chain runs to 399 residues: MIIKPKIRGFICTTAHPAGCEANVREQIAYVKSRGELKNGPKKVLVIGASTGYGLASRINAAFGSGAATIGVFFEKPGSEAKTGSAGWYNSAGFDKAAKEEGLYAKSVNGDAFSNECRQTVIDLIKQDLGQIDMVVYSLASPVRKMPETGEVVRSALKPIGEPYKSVALDTNKDVLVEAVVEPANEQEIADTVKVMGGQDWQLWMDALEEAGVLADNVQAVAYSYIGTDLTWPIYWHGTLGKAKEDLDRAALAIDQKLKAKGGAAYVAVLKSVVTQASSAIPVMPLYISIVFKIMKAQGIHEGCIEQIQRLFATKLYSGTAPDTDEKHRLRLDDWELRDDVQNTCREIWAQINDNNINELTDYLGYKAEFLRLFGFGLQGVDYEADLSGEVKFDVVELV.

NAD(+) contacts are provided by residues 48–53, 74–75, 111–112, and 139–140; these read GASTGY, FE, DA, and LA. Tyr-225 is a substrate binding site. Tyr-235 functions as the Proton donor in the catalytic mechanism. NAD(+)-binding positions include Lys-244 and 273-275; that span reads VVT.

Belongs to the TER reductase family. In terms of assembly, monomer.

The enzyme catalyses a 2,3-saturated acyl-[ACP] + NAD(+) = a (2E)-enoyl-[ACP] + NADH + H(+). It functions in the pathway lipid metabolism; fatty acid biosynthesis. Functionally, involved in the final reduction of the elongation cycle of fatty acid synthesis (FAS II). Catalyzes the reduction of a carbon-carbon double bond in an enoyl moiety that is covalently linked to an acyl carrier protein (ACP). This chain is Enoyl-[acyl-carrier-protein] reductase [NADH], found in Serratia proteamaculans (strain 568).